A 283-amino-acid polypeptide reads, in one-letter code: Pantothenate synthetase (283 aa).

ATP is bound at residue 30–37 (MGNLHQGH). Catalysis depends on H37, which acts as the Proton donor. Q61 provides a ligand contact to (R)-pantoate. Q61 lines the beta-alanine pocket. 149–152 (GEKD) contributes to the ATP binding site. Position 155 (Q155) interacts with (R)-pantoate. ATP-binding positions include V178 and 186–189 (FSSR).

The protein belongs to the pantothenate synthetase family. In terms of assembly, homodimer.

The protein resides in the cytoplasm. The catalysed reaction is (R)-pantoate + beta-alanine + ATP = (R)-pantothenate + AMP + diphosphate + H(+). The protein operates within cofactor biosynthesis; (R)-pantothenate biosynthesis; (R)-pantothenate from (R)-pantoate and beta-alanine: step 1/1. Its function is as follows. Catalyzes the condensation of pantoate with beta-alanine in an ATP-dependent reaction via a pantoyl-adenylate intermediate. The sequence is that of Pantothenate synthetase from Proteus mirabilis (strain HI4320).